Reading from the N-terminus, the 122-residue chain is Large ribosomal subunit protein uL18 (122 aa).

It belongs to the universal ribosomal protein uL18 family. As to quaternary structure, part of the 50S ribosomal subunit; part of the 5S rRNA/L5/L18/L25 subcomplex. Contacts the 5S and 23S rRNAs.

Functionally, this is one of the proteins that bind and probably mediate the attachment of the 5S RNA into the large ribosomal subunit, where it forms part of the central protuberance. The polypeptide is Large ribosomal subunit protein uL18 (Geobacter sp. (strain M21)).